The following is a 467-amino-acid chain: 2-succinylbenzoate--CoA ligase (467 aa).

This sequence belongs to the ATP-dependent AMP-binding enzyme family. MenE subfamily.

The catalysed reaction is 2-succinylbenzoate + ATP + CoA = 2-succinylbenzoyl-CoA + AMP + diphosphate. It participates in quinol/quinone metabolism; 1,4-dihydroxy-2-naphthoate biosynthesis; 1,4-dihydroxy-2-naphthoate from chorismate: step 5/7. Its pathway is quinol/quinone metabolism; menaquinone biosynthesis. Converts 2-succinylbenzoate (OSB) to 2-succinylbenzoyl-CoA (OSB-CoA). In Listeria monocytogenes serotype 4b (strain F2365), this protein is 2-succinylbenzoate--CoA ligase.